A 131-amino-acid chain; its full sequence is Large ribosomal subunit protein bL19 (131 aa).

This sequence belongs to the bacterial ribosomal protein bL19 family.

In terms of biological role, this protein is located at the 30S-50S ribosomal subunit interface and may play a role in the structure and function of the aminoacyl-tRNA binding site. The sequence is that of Large ribosomal subunit protein bL19 from Caulobacter sp. (strain K31).